The primary structure comprises 901 residues: MRAMDTQVQSAERGLVLPPMNSTVSSATAATTATNTDTDTDGDRDEERESLAEDGSEWVPAYMLTRDRSRYLGHFLGVDKMLEAVKCKYCGVIIRRQGNSISMAEASQTHLWSTHKIDPNANYYSGWTGVEAGSTFMVRPPLKNHQGGSATTNSIANLLEIDEDFLKRTREKEMALPLVQSLAIIIASENLPLSFVDNTAVRLLINQNANSLSFIDHDLILNAIRSIAYNLDRIIQRTALRNNSDLSLIIDKNYLLMDPTDRSNQLSNRLKNQLFEMQKINFFSLSHSVWNNTISILSIQYYDDFHSQVKTLPLIIQNLHEYNNDPKLSIPAQLLKISQELPGLQNTVISITLPRSQIVDLLNVMDSQPFFPNTYTNAKNYYHNCIISIINSAILPLFGTPKSADITHPRQSSFSKEPLTLLDSLIDLSNIDISNSIFSRINSFLDDLQSNSWQLDKFRSLCEKFGFEFVCSKFDLSRYSTATVSLQTFLNLRPIIEEYQSSIQIEKFNEIDFQIIDYLLITLNSINRILKFFTSSKSLNFTYVLFAIMSIEKHLLSTLGSLQFQRLIAPFETFLSKIQEFKTILFSDDMNLLAMFLCPAILFEREVLEYSFHTISLSEIVDKLSTSIFSLLKRFLNLHTIGNVNNSHNTSNHSNMNIHTDNQTNNINNRSGNNSDNNDNEHDNDNDNHSNSNTPASRIDIDPTGGENSVLPEQQPQNSNNNLSFGSLSDTHHLSDSTISKEIDSIFLQIIQEDLYDYLSTVNSIVPISYRSYCEQSNFIRDSGRFKKRIITEDSIIGELEQPMNFIEELLDIHVPVCNAFWSQYLDNDAGPIIRILFKIMQCQSSSSIRGEYSFLNDFIPRVHPDLTQEIIKIKLFNDQFVASKVDYDLDTLQTASQYLP.

Over residues 1–10 the composition is skewed to polar residues; sequence MRAMDTQVQS. Residues 1–54 form a disordered region; the sequence is MRAMDTQVQSAERGLVLPPMNSTVSSATAATTATNTDTDTDGDRDEERESLAED. N21 carries N-linked (GlcNAc...) asparagine glycosylation. Residues 27–37 show a composition bias toward low complexity; sequence ATAATTATNTD. The segment at 66-122 adopts a BED-type zinc-finger fold; the sequence is RDRSRYLGHFLGVDKMLEAVKCKYCGVIIRRQGNSISMAEASQTHLWSTHKIDPNAN. Zn(2+) contacts are provided by C87, C90, H110, and H115. N-linked (GlcNAc...) asparagine glycosylation is found at N242 and N291. A helical transmembrane segment spans residues 381–401; sequence YYHNCIISIINSAILPLFGTP. N-linked (GlcNAc...) asparagine glycans are attached at residues N540, N645, N649, N652, N662, N669, N673, N688, and N722. The segment covering 646 to 677 has biased composition (low complexity); sequence NSHNTSNHSNMNIHTDNQTNNINNRSGNNSDN. Residues 646-727 form a disordered region; it reads NSHNTSNHSN…NSNNNLSFGS (82 aa). Over residues 679-688 the composition is skewed to basic and acidic residues; sequence DNEHDNDNDN. Over residues 718-727 the composition is skewed to low complexity; sequence NSNNNLSFGS.

This sequence belongs to the VID22 family. Post-translationally, glycosylated.

The protein localises to the cell membrane. Its subcellular location is the nucleus. Functionally, has a role in the negative regulation of gluconeogenesis. Imports fructose-1,6-bisphosphatase (FBPase) into the intermediate vacuole import and degradation (Vid) vesicles. This is an indirect role and requires cyclophilin A. The chain is Vacuolar import and degradation protein 22 (VID22) from Saccharomyces cerevisiae (strain ATCC 204508 / S288c) (Baker's yeast).